The following is a 565-amino-acid chain: Sulfite reductase [NADPH] hemoprotein beta-component (565 aa).

[4Fe-4S] cluster contacts are provided by Cys-429, Cys-435, Cys-474, and Cys-478. Cys-478 contributes to the siroheme binding site.

It belongs to the nitrite and sulfite reductase 4Fe-4S domain family. As to quaternary structure, alpha(8)-beta(8). The alpha component is a flavoprotein, the beta component is a hemoprotein. The cofactor is siroheme. [4Fe-4S] cluster serves as cofactor.

The catalysed reaction is hydrogen sulfide + 3 NADP(+) + 3 H2O = sulfite + 3 NADPH + 4 H(+). It participates in sulfur metabolism; hydrogen sulfide biosynthesis; hydrogen sulfide from sulfite (NADPH route): step 1/1. Functionally, component of the sulfite reductase complex that catalyzes the 6-electron reduction of sulfite to sulfide. This is one of several activities required for the biosynthesis of L-cysteine from sulfate. The sequence is that of Sulfite reductase [NADPH] hemoprotein beta-component from Shewanella sp. (strain MR-4).